A 96-amino-acid polypeptide reads, in one-letter code: NADH-ubiquinone oxidoreductase chain 4L (96 aa).

A run of 3 helical transmembrane segments spans residues 2–22 (IMFL…FCFV), 28–48 (LLSM…MLFI), and 62–82 (MFLT…VSMI).

Belongs to the complex I subunit 4L family.

The protein resides in the mitochondrion membrane. The enzyme catalyses a ubiquinone + NADH + 5 H(+)(in) = a ubiquinol + NAD(+) + 4 H(+)(out). In terms of biological role, core subunit of the mitochondrial membrane respiratory chain NADH dehydrogenase (Complex I) that is believed to belong to the minimal assembly required for catalysis. Complex I functions in the transfer of electrons from NADH to the respiratory chain. The immediate electron acceptor for the enzyme is believed to be ubiquinone. In Drosophila nasuta F (Fruit fly), this protein is NADH-ubiquinone oxidoreductase chain 4L (mt:ND4L).